Here is a 267-residue protein sequence, read N- to C-terminus: Phosphatidylglycerol--prolipoprotein diacylglyceryl transferase (267 aa).

Transmembrane regions (helical) follow at residues 10–30 (VAIALGPFKVHWYGLMYVVGF), 54–74 (LLFYGALGVVLGGRVGYALFY), 90–110 (WDGGMSFHGGLIGVLIAAWLF), and 116–136 (LAFFQLTDFVAPLVPLGLGAG). Residue arginine 137 coordinates a 1,2-diacyl-sn-glycero-3-phospho-(1'-sn-glycerol). 3 helical membrane-spanning segments follow: residues 169 to 189 (PSPLYEFALEGVVMFVVLWWV), 197 to 217 (GMISGLFLLLYAVFRFSVEFV), and 231 to 251 (WLTMGQLLTVPMALAGIALCV).

It belongs to the Lgt family.

It localises to the cell inner membrane. The catalysed reaction is L-cysteinyl-[prolipoprotein] + a 1,2-diacyl-sn-glycero-3-phospho-(1'-sn-glycerol) = an S-1,2-diacyl-sn-glyceryl-L-cysteinyl-[prolipoprotein] + sn-glycerol 1-phosphate + H(+). Its pathway is protein modification; lipoprotein biosynthesis (diacylglyceryl transfer). Catalyzes the transfer of the diacylglyceryl group from phosphatidylglycerol to the sulfhydryl group of the N-terminal cysteine of a prolipoprotein, the first step in the formation of mature lipoproteins. The chain is Phosphatidylglycerol--prolipoprotein diacylglyceryl transferase from Chromohalobacter salexigens (strain ATCC BAA-138 / DSM 3043 / CIP 106854 / NCIMB 13768 / 1H11).